The following is a 575-amino-acid chain: TOX high mobility group box family member 3 (575 aa).

Disordered stretches follow at residues 189-258 and 516-575; these read LGGA…QKPV and QQLQ…VSIF. The segment covering 195-214 has biased composition (low complexity); it reads SHTSPSPPASKSATPSPSSS. Over residues 222–238 the composition is skewed to basic and acidic residues; that stretch reads DANRAIGEKRTAPDSGK. Residues 239 to 249 are compositionally biased toward basic residues; the sequence is KPKTPKKKKKK. A DNA-binding region (HMG box) is located at residues 254 to 322; the sequence is PQKPVSAYAL…EYLKALAAYR (69 aa). Low complexity predominate over residues 516–526; that stretch reads QQLQHMQHQSQ. Residues 527 to 541 show a composition bias toward polar residues; the sequence is PSPRQHSPVTSQITS. Over residues 548-575 the composition is skewed to low complexity; the sequence is SPQPASQQHQPQIQSQTQTQVLPQVSIF.

Homodimer. Interacts (via HGM box) with CITED1 (via C-terminus); the interaction increases estrogen-response element (ERE)-dependent transcription and protection against cell death. Interacts with CREB1 (phosphorylated form). Interacts with CREB1; the interaction is not depolarization dependent. Interacts with CREBBP (via C-terminus).

The protein localises to the nucleus. Its function is as follows. Transcriptional coactivator of the p300/CBP-mediated transcription complex. Activates transactivation through cAMP response element (CRE) sites. Protects against cell death by inducing antiapoptotic and repressing pro-apoptotic transcripts. Stimulates transcription from the estrogen-responsive or BCL-2 promoters. Required for depolarization-induced transcription activation of the C-FOS promoter in neurons. Associates with chromatin to the estrogen-responsive C3 promoter region. The polypeptide is TOX high mobility group box family member 3 (Tox3) (Mus musculus (Mouse)).